A 96-amino-acid chain; its full sequence is Small ribosomal subunit protein bS6 (96 aa).

This sequence belongs to the bacterial ribosomal protein bS6 family.

Binds together with bS18 to 16S ribosomal RNA. The polypeptide is Small ribosomal subunit protein bS6 (Salinispora arenicola (strain CNS-205)).